The chain runs to 822 residues: Anaphase-promoting complex subunit 2 (822 aa).

Phosphoserine occurs at positions 218, 314, 470, 534, and 697. Residues 450–495 (GDLAVELSKTDPASLETGQDSEDDSGEPEDWVPDPVDADPGKSSSK) form a disordered region. Residues 468-481 (QDSEDDSGEPEDWV) are compositionally biased toward acidic residues. Positions 502–700 (ISLLVSIYGS…LLRRRMSVWL (199 aa)) are cullin homology. Tyrosine 810 carries the post-translational modification Phosphotyrosine.

This sequence belongs to the cullin family. In terms of assembly, the mammalian APC/C is composed at least of 14 distinct subunits ANAPC1, ANAPC2, CDC27/APC3, ANAPC4, ANAPC5, CDC16/APC6, ANAPC7, CDC23/APC8, ANAPC10, ANAPC11, CDC26/APC12, ANAPC13, ANAPC15 and ANAPC16 that assemble into a complex of at least 19 chains with a combined molecular mass of around 1.2 MDa; APC/C interacts with FZR1 and FBXO5. In the context of the APC/C complex, directly interacts with UBE2C and UBE2S. Interacts (via cullin domain) with ANAPC11 and with UBCH10. Interacts with NEUROD2. Interacts with FBXO43; the interaction is direct.

The protein operates within protein modification; protein ubiquitination. Functionally, together with the RING-H2 protein ANAPC11, constitutes the catalytic component of the anaphase promoting complex/cyclosome (APC/C), a cell cycle-regulated E3 ubiquitin ligase that controls progression through mitosis and the G1 phase of the cell cycle. The APC/C complex acts by mediating ubiquitination and subsequent degradation of target proteins: it mainly mediates the formation of 'Lys-11'-linked polyubiquitin chains and, to a lower extent, the formation of 'Lys-48'- and 'Lys-63'-linked polyubiquitin chains. The APC/C complex catalyzes assembly of branched 'Lys-11'-/'Lys-48'-linked branched ubiquitin chains on target proteins. The CDC20-APC/C complex positively regulates the formation of synaptic vesicle clustering at active zone to the presynaptic membrane in postmitotic neurons. CDC20-APC/C-induced degradation of NEUROD2 drives presynaptic differentiation. In Homo sapiens (Human), this protein is Anaphase-promoting complex subunit 2 (ANAPC2).